Reading from the N-terminus, the 67-residue chain is Archaeal histone HAN1 subunit A (67 aa).

Interaction with DNA regions lie at residues 20 to 22 and 54 to 57; these read RVS and KTVK.

This sequence belongs to the archaeal histone HMF family. As to quaternary structure, heterodimer. Dimers then assemble into higher oligomers, with the DNA wrapped around the protein core.

It localises to the cytoplasm. The protein localises to the chromosome. In terms of biological role, binds and compact DNA (95 to 150 base pairs) to form nucleosome-like structures that contain positive DNA supercoils. Increases the resistance of DNA to thermal denaturation (in vitro). This is Archaeal histone HAN1 subunit A (han1A) from Thermococcus zilligii.